The following is a 133-amino-acid chain: Inhibitor of g-type lysozyme (133 aa).

The first 22 residues, 1–22 (MKIKSIRKAVLLLALLTSTSFA), serve as a signal peptide directing secretion.

Its subcellular location is the periplasm. Inhibits activity of g-type lysozyme, which confers increased lysozyme tolerance to the bacterium. The chain is Inhibitor of g-type lysozyme (pliG) from Escherichia coli (strain K12).